The sequence spans 402 residues: Multidrug resistance protein MdtH (402 aa).

The Cytoplasmic segment spans residues 1–12 (MSRVSQARNLGK). Residues 13-33 (YFLLIDNMLVVLGFFVVFPLI) form a helical membrane-spanning segment. Residues 34–98 (SIRFIDQMGW…GFATMGIAHE (65 aa)) are Periplasmic-facing. Residues 99 to 116 (PWLLWFSCFLSGLGGTLF) traverse the membrane as a helical segment. Residues 117 to 138 (DPPRSALVVKLIRPEQRGRFFS) lie on the Cytoplasmic side of the membrane. Residues 139–159 (LLMMQDSAGAVIGALLGSWLL) traverse the membrane as a helical segment. The Periplasmic segment spans residues 160–164 (QYDFR). The helical transmembrane segment at 165–185 (LVCATGAILFILCALFNAWLL) threads the bilayer. Residues 186 to 213 (PAWKLSTVRTPVREGMRRVMSDKRFVTY) are Cytoplasmic-facing. A helical transmembrane segment spans residues 214–234 (VLTLAGYYMLAVQVMLMLPIM). The Periplasmic segment spans residues 235–243 (VNDIAGSPA). Residues 244-264 (AVKWMYAIEACLSLTLLYPIA) form a helical membrane-spanning segment. Residues 265-276 (RWSEKRFRLEHR) are Cytoplasmic-facing. Residues 277–297 (LMAGLLVMSLSMIPIGMVGNL) form a helical membrane-spanning segment. Topologically, residues 298–299 (QQ) are periplasmic. Residues 300–320 (LFTLICAFYIGSVIAEPARET) form a helical membrane-spanning segment. Over 321–339 (LSASLADARARGSYMGFSR) the chain is Cytoplasmic. The chain crosses the membrane as a helical span at residues 340–360 (LGLAIGGAIGYIGGGWLFDMG). Residues 361 to 367 (KALTQPE) lie on the Periplasmic side of the membrane. The helical transmembrane segment at 368–388 (LPWMMLGIIGFITFLALGWQF) threads the bilayer. Topologically, residues 389 to 402 (SHKRTPRRMLEPGA) are cytoplasmic.

The protein belongs to the major facilitator superfamily. DHA1 family. MdtH (TC 2.A.1.2.21) subfamily.

The protein localises to the cell inner membrane. The polypeptide is Multidrug resistance protein MdtH (Salmonella paratyphi C (strain RKS4594)).